Here is a 232-residue protein sequence, read N- to C-terminus: Ribose-5-phosphate isomerase A (232 aa).

Residues 28 to 31, 83 to 86, and 96 to 99 each bind substrate; these read TGST, DGAD, and KGGG. The Proton acceptor role is filled by Glu105. A substrate-binding site is contributed by Lys123.

The protein belongs to the ribose 5-phosphate isomerase family. As to quaternary structure, homodimer.

It carries out the reaction aldehydo-D-ribose 5-phosphate = D-ribulose 5-phosphate. It functions in the pathway carbohydrate degradation; pentose phosphate pathway; D-ribose 5-phosphate from D-ribulose 5-phosphate (non-oxidative stage): step 1/1. Functionally, catalyzes the reversible conversion of ribose-5-phosphate to ribulose 5-phosphate. The protein is Ribose-5-phosphate isomerase A of Rhodopseudomonas palustris (strain ATCC BAA-98 / CGA009).